The chain runs to 491 residues: Glutamine synthetase (491 aa).

The GS beta-grasp domain occupies 23–111 (NNVRQVLCAF…MFGNVYEAWG (89 aa)). In terms of domain architecture, GS catalytic spans 119-491 (PRGYVAKRYE…PWEFMKYFDI (373 aa)). 2 residues coordinate Mg(2+): E143 and E145. E225 is an ATP binding site. Mg(2+) is bound by residues E230 and E238. L-glutamate is bound by residues 282–283 (NA) and A283. H287 provides a ligand contact to Mg(2+). Residues 289–291 (HQS) and S291 each bind ATP. R344, E350, and R362 together coordinate L-glutamate. ATP-binding residues include R362 and R367. Residue E381 participates in Mg(2+) binding. L-glutamate is bound at residue R383.

It belongs to the glutamine synthetase family. Oligomer of 12 subunits arranged in the form of two hexagons. It depends on Mg(2+) as a cofactor.

It localises to the cytoplasm. The catalysed reaction is L-glutamate + NH4(+) + ATP = L-glutamine + ADP + phosphate + H(+). Probably involved in nitrogen metabolism via ammonium assimilation. Catalyzes the ATP-dependent biosynthesis of glutamine from glutamate and ammonia. Beta-glutamate is a much poorer substrate than alpha-glutamate. This chain is Glutamine synthetase, found in Archaeoglobus fulgidus (strain ATCC 49558 / DSM 4304 / JCM 9628 / NBRC 100126 / VC-16).